Consider the following 277-residue polypeptide: 3-methyl-2-oxobutanoate hydroxymethyltransferase (277 aa).

Mg(2+) contacts are provided by Asp-49 and Asp-88. 3-methyl-2-oxobutanoate-binding positions include 49–50, Asp-88, and Lys-118; that span reads DS. Position 120 (Glu-120) interacts with Mg(2+). Catalysis depends on Glu-186, which acts as the Proton acceptor.

The protein belongs to the PanB family. Homodecamer; pentamer of dimers. Mg(2+) is required as a cofactor.

The protein resides in the cytoplasm. It carries out the reaction 3-methyl-2-oxobutanoate + (6R)-5,10-methylene-5,6,7,8-tetrahydrofolate + H2O = 2-dehydropantoate + (6S)-5,6,7,8-tetrahydrofolate. The protein operates within cofactor biosynthesis; (R)-pantothenate biosynthesis; (R)-pantoate from 3-methyl-2-oxobutanoate: step 1/2. Functionally, catalyzes the reversible reaction in which hydroxymethyl group from 5,10-methylenetetrahydrofolate is transferred onto alpha-ketoisovalerate to form ketopantoate. This is 3-methyl-2-oxobutanoate hydroxymethyltransferase from Cereibacter sphaeroides (strain ATCC 17025 / ATH 2.4.3) (Rhodobacter sphaeroides).